The sequence spans 490 residues: Cardiolipin synthase A (490 aa).

Transmembrane regions (helical) follow at residues Tyr4–Val24 and Ala39–Leu59. PLD phosphodiesterase domains are found at residues Met220–Tyr247 and Lys403–Ser430. Catalysis depends on residues His225, Lys227, Asp232, His408, Lys410, and Asp415.

It belongs to the phospholipase D family. Cardiolipin synthase subfamily. ClsA sub-subfamily.

Its subcellular location is the cell membrane. The catalysed reaction is 2 a 1,2-diacyl-sn-glycero-3-phospho-(1'-sn-glycerol) = a cardiolipin + glycerol. Its function is as follows. Catalyzes the reversible phosphatidyl group transfer from one phosphatidylglycerol molecule to another to form cardiolipin (CL) (diphosphatidylglycerol) and glycerol. The polypeptide is Cardiolipin synthase A (Buchnera aphidicola subsp. Baizongia pistaciae (strain Bp)).